We begin with the raw amino-acid sequence, 367 residues long: tRNA pseudouridine synthase D (367 aa).

The active-site Nucleophile is Asp-80. A TRUD domain is found at 156 to 316; it reads GIPNWFGEQR…LKQERRALRL (161 aa).

It belongs to the pseudouridine synthase TruD family.

It catalyses the reaction uridine(13) in tRNA = pseudouridine(13) in tRNA. Responsible for synthesis of pseudouridine from uracil-13 in transfer RNAs. In Xanthomonas campestris pv. campestris (strain 8004), this protein is tRNA pseudouridine synthase D.